An 87-amino-acid chain; its full sequence is Small ribosomal subunit protein bS20 (87 aa).

It belongs to the bacterial ribosomal protein bS20 family.

Functionally, binds directly to 16S ribosomal RNA. This Corynebacterium urealyticum (strain ATCC 43042 / DSM 7109) protein is Small ribosomal subunit protein bS20.